The sequence spans 107 residues: Iron-binding protein IscA (107 aa).

Fe cation contacts are provided by Cys-35, Cys-99, and Cys-101.

Belongs to the HesB/IscA family. In terms of assembly, homodimer; may form tetramers and higher multimers. It depends on Fe cation as a cofactor.

Its function is as follows. Is able to transfer iron-sulfur clusters to apo-ferredoxin. Multiple cycles of [2Fe2S] cluster formation and transfer are observed, suggesting that IscA acts catalytically. Recruits intracellular free iron so as to provide iron for the assembly of transient iron-sulfur cluster in IscU in the presence of IscS, L-cysteine and the thioredoxin reductase system TrxA/TrxB. This is Iron-binding protein IscA from Proteus mirabilis (strain HI4320).